Reading from the N-terminus, the 313-residue chain is Dihydroorotate dehydrogenase B (NAD(+)), catalytic subunit (313 aa).

FMN contacts are provided by residues Ser21 and 45 to 46 (KA). Residues Lys45 and 69 to 73 (NAIGL) each bind substrate. FMN is bound by residues Asn99 and Asn127. Asn127 lines the substrate pocket. Residue Cys130 is the Nucleophile of the active site. Ile191 contributes to the FMN binding site. 192 to 193 (NT) is a binding site for substrate. FMN-binding positions include Gly217, 243-244 (GG), and 265-266 (GT).

It belongs to the dihydroorotate dehydrogenase family. Type 1 subfamily. As to quaternary structure, heterotetramer of 2 PyrK and 2 PyrD type B subunits. FMN is required as a cofactor.

Its subcellular location is the cytoplasm. It carries out the reaction (S)-dihydroorotate + NAD(+) = orotate + NADH + H(+). It functions in the pathway pyrimidine metabolism; UMP biosynthesis via de novo pathway; orotate from (S)-dihydroorotate (NAD(+) route): step 1/1. Its function is as follows. Catalyzes the conversion of dihydroorotate to orotate with NAD(+) as electron acceptor. This is Dihydroorotate dehydrogenase B (NAD(+)), catalytic subunit (pyrD) from Bacillus caldolyticus.